The following is a 208-amino-acid chain: Intraflagellar transport protein 43 homolog (208 aa).

An N-acetylmethionine modification is found at Met-1. The interval 18-65 (SRAKMGRRAQQESAQAENHLNGKNSSLTLTGETSSAKLPRCRQGGWAG) is disordered. The segment covering 28-53 (QESAQAENHLNGKNSSLTLTGETSSA) has biased composition (polar residues). Ser-78 bears the Phosphoserine mark.

It belongs to the IFT43 family. As to quaternary structure, component of the IFT complex A (IFT-A) complex. IFT-A complex is divided into a core subcomplex composed of IFT122:IFT140:WDR19 which is associated with TULP3 and a peripheral subcomplex composed of IFT43:WDR35:TTC21B. Interacts directy with IFT122, WDR35 and TTC21B. Expressed in the retina, predominantly in the photoreceptor outer segment.

The protein localises to the cytoplasm. The protein resides in the cytoskeleton. It is found in the cell projection. Its subcellular location is the cilium. Functionally, as a component of IFT complex A (IFT-A), a complex required for retrograde ciliary transport and entry into cilia of G protein-coupled receptors (GPCRs), it is involved in ciliogenesis. Involved in retrograde ciliary transport along microtubules from the ciliary tip to the base. This chain is Intraflagellar transport protein 43 homolog, found in Homo sapiens (Human).